The following is a 197-amino-acid chain: Probable GTP-binding protein EngB (197 aa).

Residues 25-197 (SAPEIAFAGR…VRDEFFKFTR (173 aa)) enclose the EngB-type G domain. GTP contacts are provided by residues 33–40 (GRSNVGKS), 60–64 (GCTRQ), 79–82 (DLPG), 146–149 (TKID), and 177–179 (ISI). Residues serine 40 and threonine 62 each coordinate Mg(2+).

It belongs to the TRAFAC class TrmE-Era-EngA-EngB-Septin-like GTPase superfamily. EngB GTPase family. The cofactor is Mg(2+).

Necessary for normal cell division and for the maintenance of normal septation. The protein is Probable GTP-binding protein EngB of Wolbachia pipientis subsp. Culex pipiens (strain wPip).